A 392-amino-acid chain; its full sequence is Elongation factor Tu-3 (392 aa).

The tr-type G domain occupies 10–206 (KPHLNIGTMG…AVDTYVPMPE (197 aa)). A G1 region spans residues 19 to 26 (GHVDHGKT). Residue 19–26 (GHVDHGKT) participates in GTP binding. Thr-26 is a Mg(2+) binding site. A G2 region spans residues 63-67 (GITIN). The segment at 84-87 (DMPG) is G3. GTP contacts are provided by residues 84–88 (DMPGH) and 139–142 (NKAD). The segment at 139 to 142 (NKAD) is G4. Positions 176 to 178 (SGL) are G5.

The protein belongs to the TRAFAC class translation factor GTPase superfamily. Classic translation factor GTPase family. EF-Tu/EF-1A subfamily. In terms of assembly, monomer.

The protein localises to the cytoplasm. It carries out the reaction GTP + H2O = GDP + phosphate + H(+). GTP hydrolase that promotes the GTP-dependent binding of aminoacyl-tRNA to the A-site of ribosomes during protein biosynthesis. This Streptomyces coelicolor (strain ATCC BAA-471 / A3(2) / M145) protein is Elongation factor Tu-3.